The chain runs to 275 residues: Homeobox-leucine zipper protein ATHB-17 (275 aa).

Positions 95–143 (SSPLSDEGSGGGRDQLRLDMNRLPSSEDGDDEEFSHDDGSAPPRKKLRL) are disordered. The segment at residues 136–195 (PPRKKLRLTREQSRLLEDSFRQNHTLNPKQKEVLAKHLMLRPRQIEVWFQNRRARSKLKQ) is a DNA-binding region (homeobox). Residues 203–224 (LKRWFGSLTEENHRLHREVEEL) form a leucine-zipper region. The disordered stretch occupies residues 252–275 (AASPSRAVVPVPAKKTFPPQERDR).

Belongs to the HD-ZIP homeobox family. Class II subfamily.

It is found in the nucleus. Probable transcription factor. This is Homeobox-leucine zipper protein ATHB-17 (ATHB-17) from Arabidopsis thaliana (Mouse-ear cress).